The sequence spans 261 residues: MNPEWGQAFVHVAVAGGLCAVAVFTGIFDSVSVQVGYEHYAEAPVAGLPAFLAMPFNSLVNMAYTLLGLSWLHRGGAMGLGPRYLKDVFAAMALLYGPVQWLRLWTQWRRAAVLDQWLTLPIFAWPVAWCLYLDRGWRPWLFLSLECVSLASYGLALLHPQGFEVALGAHVVAAVGQALRTHRHYGSTTSATYLALGVLSCLGFVVLKLCDHQLARWRLFQCLTGHFWSKVCDVLQFHFAFLFLTHFNTHPRFHPSGGKTR.

6 helical membrane-spanning segments follow: residues 8–28 (AFVHVAVAGGLCAVAVFTGIF), 43–63 (APVAGLPAFLAMPFNSLVNMA), 88–108 (VFAAMALLYGPVQWLRLWTQW), 113–133 (VLDQWLTLPIFAWPVAWCLYL), 140–162 (WLFLSLECVSLASYGLALLHPQG), and 190–210 (SATYLALGVLSCLGFVVLKLC).

Ubiquitous.

The protein localises to the membrane. The protein is Transmembrane protein 187 (TMEM187) of Homo sapiens (Human).